The primary structure comprises 86 residues: Putative membrane protein insertion efficiency factor (86 aa).

Residues 64–86 form a disordered region; it reads GVDPVPKKSSSKTSTTACGCGHS. The segment covering 70 to 79 has biased composition (low complexity); it reads KKSSSKTSTT.

The protein belongs to the UPF0161 family.

The protein localises to the cell inner membrane. Functionally, could be involved in insertion of integral membrane proteins into the membrane. The chain is Putative membrane protein insertion efficiency factor from Janthinobacterium sp. (strain Marseille) (Minibacterium massiliensis).